The following is a 567-amino-acid chain: Geranylgeranyl transferase type-2 subunit alpha (567 aa).

PFTA repeat units lie at residues 44 to 78, 88 to 122, 124 to 158, 159 to 193, 207 to 241, and 363 to 397; these read LDES…QLET, LVKA…RLPE, NWTR…QAAV, PPAE…QLHP, VLLK…RADP, and VLQS…ALDP. S98 bears the Phosphoserine mark. 5 LRR repeats span residues 442–463, 464–486, 487–508, 509–530, and 534–555; these read EVRV…EQLL, LVTH…AALR, CLEV…TNLP, RLQE…QPLA, and RLVL…LEQL.

The protein belongs to the protein prenyltransferase subunit alpha family. As to quaternary structure, heterotrimer composed of RABGGTA, RABGGTB and CHM; within this trimer, RABGGTA and RABGGTB form the catalytic component B, while CHM (component A) mediates peptide substrate binding. The Rab GGTase dimer (RGGT) interacts with CHM (component A) prior to Rab protein binding; the association is stabilized by geranylgeranyl pyrophosphate (GGpp). The CHM:RGGT:Rab complex is destabilized by GGpp. Interacts with non-phosphorylated form of RAB8A; phosphorylation of RAB8A at 'Thr-72' disrupts this interaction.

It catalyses the reaction geranylgeranyl diphosphate + L-cysteinyl-[protein] = S-geranylgeranyl-L-cysteinyl-[protein] + diphosphate. The enzymatic reaction requires the aid of a Rab escort protein (also called component A), such as CHM. Its function is as follows. Catalyzes the transfer of a geranylgeranyl moiety from geranylgeranyl diphosphate to both cysteines of Rab proteins with the C-terminal sequence -XXCC, -XCXC and -CCXX, such as RAB1A, RAB3A, RAB5A and RAB7A. The polypeptide is Geranylgeranyl transferase type-2 subunit alpha (RABGGTA) (Homo sapiens (Human)).